The following is a 381-amino-acid chain: MPFGNTHNKWKLNYSAAEEFPDLSKHNNHMAKALTLDIYKKLRDKETPSGFTLDDIIQTGVDNPGHPFIMTVGCVAGDEECYEVFKDLFDPVIEDRHGGYKPTDKHKTDLNQENLKGGDDLDPNYVLSSRVRTGRSIKGIALPPHCSRGERRLVEKLCIDGLATLTGEFQGKYYPLSSMSDAEQQQLIDDHFLFDKPISPLLLASGMARDWPDGRGIWHNNDKTFLVWVNEEDHLRVISMQKGGNMKEVFRRFCVGLKKIEDIFVKAGRGFMWNEHLGYVLTCPSNLGTGLRGGVHVKIPHLCKHEKFSEVLKRTRLQKRGTGGVDTAAVGSIYDISNADRLGFSEVEQVQMVVDGVKLMVEMEKRLENGKSIDDLMPAQK.

Residues 11–98 form the Phosphagen kinase N-terminal domain; it reads KLNYSAAEEF…FDPVIEDRHG (88 aa). One can recognise a Phosphagen kinase C-terminal domain in the interval 125 to 367; that stretch reads YVLSSRVRTG…KLMVEMEKRL (243 aa). Residues 128-132, His191, Arg236, Arg292, 320-325, and Asp335 contribute to the ATP site; these read SSRVR and RGTGGV.

This sequence belongs to the ATP:guanido phosphotransferase family. In terms of assembly, dimer of identical or non-identical chains. With MM being the major form in skeletal muscle and myocardium, MB existing in myocardium, and BB existing in many tissues, especially brain.

The protein localises to the cytoplasm. The catalysed reaction is creatine + ATP = N-phosphocreatine + ADP + H(+). In terms of biological role, reversibly catalyzes the transfer of phosphate between ATP and various phosphogens (e.g. creatine phosphate). Creatine kinase isoenzymes play a central role in energy transduction in tissues with large, fluctuating energy demands, such as skeletal muscle, heart, brain and spermatozoa. The chain is Creatine kinase M-type from Tetronarce californica (Pacific electric ray).